The sequence spans 398 residues: ATP-dependent RNA helicase eIF4A (398 aa).

A Q motif motif is present at residues 25-53 (DSFDSMELKPELLRGIYAYGFERPSAIQQ). Residues 56 to 226 (ILPIIKGNDV…TKFMRDPVRI (171 aa)) enclose the Helicase ATP-binding domain. 69–76 (AQSGTGKT) serves as a coordination point for ATP. A DEAD box motif is present at residues 174 to 177 (DEAD). The Helicase C-terminal domain occupies 237–398 (GIKQFYIAVE…EMPMNVADLI (162 aa)).

The protein belongs to the DEAD box helicase family. eIF4A subfamily. As to quaternary structure, component of the eIF4F complex, which composition varies with external and internal environmental conditions. It is composed of at least eIF4A, eIF4E and eIF4G.

It localises to the cytoplasm. It carries out the reaction ATP + H2O = ADP + phosphate + H(+). Functionally, ATP-dependent RNA helicase which is a subunit of the eIF4F complex involved in cap recognition and is required for mRNA binding to ribosome. In the current model of translation initiation, eIF4A unwinds RNA secondary structures in the 5'-UTR of mRNAs which is necessary to allow efficient binding of the small ribosomal subunit, and subsequent scanning for the initiator codon. The polypeptide is ATP-dependent RNA helicase eIF4A (tif1) (Neosartorya fischeri (strain ATCC 1020 / DSM 3700 / CBS 544.65 / FGSC A1164 / JCM 1740 / NRRL 181 / WB 181) (Aspergillus fischerianus)).